A 397-amino-acid chain; its full sequence is 42.8 kDa protein in whiE locus (397 aa).

A disordered region spans residues Met1–Thr22. Residues Ala8–Thr22 show a composition bias toward low complexity. The ABM domain maps to Val46 to Leu137.

It belongs to the SchA/CurD family.

The chain is 42.8 kDa protein in whiE locus from Streptomyces coelicolor (strain ATCC BAA-471 / A3(2) / M145).